Here is a 172-residue protein sequence, read N- to C-terminus: Large ribosomal subunit protein bL17 (172 aa).

A disordered region spans residues 127–172 (KAAKQDRAKRVKGSKKVTGDVAPAVAPVPSAPAETQEEAKAPESAE). Residues 147–159 (VAPAVAPVPSAPA) show a composition bias toward low complexity. Over residues 163–172 (EEAKAPESAE) the composition is skewed to basic and acidic residues.

The protein belongs to the bacterial ribosomal protein bL17 family. In terms of assembly, part of the 50S ribosomal subunit. Contacts protein L32.

In Chlorobium luteolum (strain DSM 273 / BCRC 81028 / 2530) (Pelodictyon luteolum), this protein is Large ribosomal subunit protein bL17.